The chain runs to 165 residues: NADPH-dependent 7-cyano-7-deazaguanine reductase (165 aa).

C56 acts as the Thioimide intermediate in catalysis. The active-site Proton donor is the D63. Residues 78 to 80 and 97 to 98 each bind substrate; these read VES and HE.

Belongs to the GTP cyclohydrolase I family. QueF type 1 subfamily.

It localises to the cytoplasm. The catalysed reaction is 7-aminomethyl-7-carbaguanine + 2 NADP(+) = 7-cyano-7-deazaguanine + 2 NADPH + 3 H(+). It functions in the pathway tRNA modification; tRNA-queuosine biosynthesis. Its function is as follows. Catalyzes the NADPH-dependent reduction of 7-cyano-7-deazaguanine (preQ0) to 7-aminomethyl-7-deazaguanine (preQ1). This Bacillus cytotoxicus (strain DSM 22905 / CIP 110041 / 391-98 / NVH 391-98) protein is NADPH-dependent 7-cyano-7-deazaguanine reductase.